The primary structure comprises 780 residues: MASVDLEKLRTTGAGKAIGVLTSGGDAQGMNAAVRAVTRMGIYVGAKVFLIYEGYEGLVEGGENIKQANWLSVSNIIQLGGTVIGSARCKAFTTREGRRAAAYNLVQRGITNLCVIGGDGSLTGANIFRSEWGSLLEELVSEGKISEGTAQTYSHLNIAGLVGSIDNDFCGTDMTIGTDSALHRIMEVIDAITTTAQSHQRTFVLEVMGRHCGYLALVSALASGADWLFIPEAPPEDGWENFMCERLGETRSRGSRLNIIIIAEGAIDRNGKPISSRYVKDLVVQRLGFDTRVTVLGHVQRGGTPSAFDRILSSKMGMEAVMALLEATPDTPACVVSLSGNQSVRLPLMECVQMTKEVQKAMDEKRFDEAIQLRGGSFENNWNIYKLLSHQKISKEKTNFSLAILNVGAPAAGMNAAVRSAVRSGISQGHTVYVVHDGFEGLAKNQVQEVSWHDVAGWLGRGGSMLGTKRTLPKGFMEKIVENIRLHNIHALLVIGGFEAYEGVLQLVEARGRYEELCIVMCVIPATISNNVPGTDFSLGSDTAVNAAMESCDRIKQSASGTKRRVFIVETMGGYCGYLATVTGIAVGADAAYVFEDPFNIQDLKANVEHMTEKMKTEIQRGLVLRNEKCHEHYTTEFLYNLYSSEGKGVFDCRTNVLGHLQQGGAPTPFDRNYGTKLGVKAIIWMSEKLRAVYRNGRVFANASDSACVIGLQKKVVAFSPVTELKKDTDFEHRMPREQWWLNLRLMLKMLAHYRISMADYVSGELEHVTRRTLSIETGF.

N-acetylalanine is present on A2. The N-terminal catalytic PFK domain 1 stretch occupies residues 2-390; the sequence is ASVDLEKLRT…NWNIYKLLSH (389 aa). Residues G25, 88 to 89, and 118 to 121 each bind ATP; these read RC and GDGS. D119 is a binding site for Mg(2+). Substrate is bound by residues 164–166, R201, 208–210, E264, R292, and 298–301; these read SID, MGR, and HVQR. D166 acts as the Proton acceptor in catalysis. S377 is modified (phosphoserine). The tract at residues 391-400 is interdomain linker; sequence QKISKEKTNF. The interval 401 to 780 is C-terminal regulatory PFK domain 2; the sequence is SLAILNVGAP…RRTLSIETGF (380 aa). Residues R470, 527–531, R565, 572–574, and E628 each bind beta-D-fructose 2,6-bisphosphate; these read TISNN and MGG. The O-linked (GlcNAc) serine glycan is linked to S529. Phosphotyrosine is present on Y640. Residues R654, 660-663, and R734 contribute to the beta-D-fructose 2,6-bisphosphate site; that span reads HLQQ. S775 carries the phosphoserine modification.

This sequence belongs to the phosphofructokinase type A (PFKA) family. ATP-dependent PFK group I subfamily. Eukaryotic two domain clade 'E' sub-subfamily. In terms of assembly, homo- and heterotetramers. Phosphofructokinase (PFK) enzyme functions as a tetramer composed of different combinations of 3 types of subunits, called PFKM (M), PFKL (L) and PFKP (P). The composition of the PFK tetramer differs according to the tissue type it is present in. The kinetic and regulatory properties of the tetrameric enzyme are dependent on the subunit composition, hence can vary across tissues. Mg(2+) is required as a cofactor. In terms of processing, glcNAcylation at Ser-529 by OGT decreases enzyme activity, leading to redirect glucose flux through the oxidative pentose phosphate pathway. Glycosylation is stimulated by both hypoxia and glucose deprivation.

The protein localises to the cytoplasm. The enzyme catalyses beta-D-fructose 6-phosphate + ATP = beta-D-fructose 1,6-bisphosphate + ADP + H(+). The protein operates within carbohydrate degradation; glycolysis; D-glyceraldehyde 3-phosphate and glycerone phosphate from D-glucose: step 3/4. With respect to regulation, allosterically activated by ADP, AMP, or fructose 2,6-bisphosphate, and allosterically inhibited by ATP or citrate. GlcNAcylation by OGT overcomes allosteric regulation. In terms of biological role, catalyzes the phosphorylation of D-fructose 6-phosphate to fructose 1,6-bisphosphate by ATP, the first committing step of glycolysis. Negatively regulates the phagocyte oxidative burst in response to bacterial infection by controlling cellular NADPH biosynthesis and NADPH oxidase-derived reactive oxygen species. Upon macrophage activation, drives the metabolic switch toward glycolysis, thus preventing glucose turnover that produces NADPH via pentose phosphate pathway. This Bos taurus (Bovine) protein is ATP-dependent 6-phosphofructokinase, liver type (PFKL).